Consider the following 290-residue polypeptide: Glycine--tRNA ligase alpha subunit (290 aa).

The protein belongs to the class-II aminoacyl-tRNA synthetase family. As to quaternary structure, tetramer of two alpha and two beta subunits.

It localises to the cytoplasm. The catalysed reaction is tRNA(Gly) + glycine + ATP = glycyl-tRNA(Gly) + AMP + diphosphate. The polypeptide is Glycine--tRNA ligase alpha subunit (Gloeobacter violaceus (strain ATCC 29082 / PCC 7421)).